Consider the following 157-residue polypeptide: Protein TIFY 8 (157 aa).

Residues 33 to 68 (VPGTTEQLTIFYSGSMVKFDNVPREKIRYACRLRRL) enclose the Tify domain. The disordered stretch occupies residues 126-147 (SIGAQRTGTPPSRRRIHARGKS). A compositionally biased stretch (basic residues) spans 137–147 (SRRRIHARGKS).

This sequence belongs to the TIFY/JAZ family. Post-translationally, ubiquitinated. Targeted for degradation by the SCF(COI1) E3 ubiquitin ligase-proteasome pathway during jasmonate signaling.

Repressor of jasmonate responses. The sequence is that of Protein TIFY 8 from Oryza sativa subsp. japonica (Rice).